We begin with the raw amino-acid sequence, 913 residues long: Valine--tRNA ligase (913 aa).

Positions 49–59 match the 'HIGH' region motif; it reads PNVTGNLHLGH. The 'KMSKS' region signature appears at 544 to 548; the sequence is KMSKS. Lys-547 is a binding site for ATP. The stretch at 851–912 forms a coiled coil; that stretch reads DWVKKQQKRL…ERLEGVLAQL (62 aa).

Belongs to the class-I aminoacyl-tRNA synthetase family. ValS type 1 subfamily. Monomer.

Its subcellular location is the cytoplasm. The enzyme catalyses tRNA(Val) + L-valine + ATP = L-valyl-tRNA(Val) + AMP + diphosphate. Functionally, catalyzes the attachment of valine to tRNA(Val). As ValRS can inadvertently accommodate and process structurally similar amino acids such as threonine, to avoid such errors, it has a 'posttransfer' editing activity that hydrolyzes mischarged Thr-tRNA(Val) in a tRNA-dependent manner. In Deinococcus radiodurans (strain ATCC 13939 / DSM 20539 / JCM 16871 / CCUG 27074 / LMG 4051 / NBRC 15346 / NCIMB 9279 / VKM B-1422 / R1), this protein is Valine--tRNA ligase.